The sequence spans 166 residues: NADH-quinone oxidoreductase subunit B 1 (166 aa).

Residues Cys39, Cys40, Cys106, and Cys135 each contribute to the [4Fe-4S] cluster site.

Belongs to the complex I 20 kDa subunit family. As to quaternary structure, NDH-1 is composed of 14 different subunits. Subunits NuoB, C, D, E, F, and G constitute the peripheral sector of the complex. Requires [4Fe-4S] cluster as cofactor.

It localises to the cell membrane. It carries out the reaction a quinone + NADH + 5 H(+)(in) = a quinol + NAD(+) + 4 H(+)(out). NDH-1 shuttles electrons from NADH, via FMN and iron-sulfur (Fe-S) centers, to quinones in the respiratory chain. The immediate electron acceptor for the enzyme in this species is believed to be a menaquinone. Couples the redox reaction to proton translocation (for every two electrons transferred, four hydrogen ions are translocated across the cytoplasmic membrane), and thus conserves the redox energy in a proton gradient. This is NADH-quinone oxidoreductase subunit B 1 from Symbiobacterium thermophilum (strain DSM 24528 / JCM 14929 / IAM 14863 / T).